The chain runs to 485 residues: NADH-quinone oxidoreductase subunit N (485 aa).

The next 14 helical transmembrane spans lie at 8–28 (LIALLPLLIVGLTVVVVMLSI), 35–55 (FLNATLSVIGLNAALVSLWFV), 71–91 (GFAMLYTGLVLLASLATCTFA), 105–125 (FYLLVLIAALGGILLANANHL), 127–147 (ALFLGIELISLPLFGLIGYAF), 159–179 (YTILSAAASSFLLFGMALVYA), 203–223 (LLAGFGLMIVGLGFKLSLVPF), 235–255 (PAPVSTFLATASKIAIFGVVM), 271–291 (IVLGVIAFASIIFGNLMALSQ), 297–317 (LLGYSSISHLGYLLVALIALQ), 326–346 (VGVYLAGYLFSSLGAFGVVSL), 373–393 (AAVMTVMMLSLAGIPMTLGFI), 408–430 (WWLVAAVVVGSAIGLYYYLRVAV), and 455–475 (IVVLISALLVLVLGIYPQPLI).

This sequence belongs to the complex I subunit 2 family. NDH-1 is composed of 13 different subunits. Subunits NuoA, H, J, K, L, M, N constitute the membrane sector of the complex.

Its subcellular location is the cell inner membrane. It carries out the reaction a quinone + NADH + 5 H(+)(in) = a quinol + NAD(+) + 4 H(+)(out). Its function is as follows. NDH-1 shuttles electrons from NADH, via FMN and iron-sulfur (Fe-S) centers, to quinones in the respiratory chain. The immediate electron acceptor for the enzyme in this species is believed to be ubiquinone. Couples the redox reaction to proton translocation (for every two electrons transferred, four hydrogen ions are translocated across the cytoplasmic membrane), and thus conserves the redox energy in a proton gradient. In Citrobacter koseri (strain ATCC BAA-895 / CDC 4225-83 / SGSC4696), this protein is NADH-quinone oxidoreductase subunit N.